A 183-amino-acid polypeptide reads, in one-letter code: dCTP deaminase (183 aa).

Residues 97–102 and Asp113 contribute to the dCTP site; that span reads RSSFAR. Catalysis depends on Glu123, which acts as the Proton donor/acceptor. Residues Tyr155 and Gln162 each contribute to the dCTP site.

This sequence belongs to the dCTP deaminase family. Homotrimer.

It carries out the reaction dCTP + H2O + H(+) = dUTP + NH4(+). It participates in pyrimidine metabolism; dUMP biosynthesis; dUMP from dCTP (dUTP route): step 1/2. Functionally, catalyzes the deamination of dCTP to dUTP. This is dCTP deaminase from Sulfurisphaera tokodaii (strain DSM 16993 / JCM 10545 / NBRC 100140 / 7) (Sulfolobus tokodaii).